The sequence spans 123 residues: Cell division protein SepF (123 aa).

It belongs to the SepF family. As to quaternary structure, homodimer. Interacts with FtsZ.

It is found in the cytoplasm. Cell division protein that is part of the divisome complex and is recruited early to the Z-ring. Probably stimulates Z-ring formation, perhaps through the cross-linking of FtsZ protofilaments. Its function overlaps with FtsA. This Tropheryma whipplei (strain TW08/27) (Whipple's bacillus) protein is Cell division protein SepF.